We begin with the raw amino-acid sequence, 314 residues long: MQVTFLGTSSGVPTLNRNVSAMVLKPPQRSELWLFDCGEGTQHQFIRSNLKLSQIKKIFITHMHGDHIYGLPGLLASIGLAGSSSGIELYGPAPLKNFIDSCLYNSSSRLAYSLKFHRVENAANNKEILFEDSELEVKTAPLKHRIPSFAYRVNQKTRPGRFDIEKAKLKGIPPGPVYADLQRGEEVRLEDGRIFSGKEFCGPPRPGVSMVYCTDTVYTESAIEISRKADLLIHESTYSYKETEMAYERGHSTATMAAQIAAKANVDQLILTHLSPRYTPGNQTCPNDLLNEAKAIFPNTQLAKDFLQIDLNKS.

Residues His-62, His-64, Asp-66, His-67, His-144, Asp-215, and His-273 each contribute to the Zn(2+) site. Asp-66 acts as the Proton acceptor in catalysis.

This sequence belongs to the RNase Z family. In terms of assembly, homodimer. The cofactor is Zn(2+).

The catalysed reaction is Endonucleolytic cleavage of RNA, removing extra 3' nucleotides from tRNA precursor, generating 3' termini of tRNAs. A 3'-hydroxy group is left at the tRNA terminus and a 5'-phosphoryl group is left at the trailer molecule.. In terms of biological role, zinc phosphodiesterase, which displays some tRNA 3'-processing endonuclease activity. Probably involved in tRNA maturation, by removing a 3'-trailer from precursor tRNA. This chain is Ribonuclease Z, found in Prochlorococcus marinus (strain NATL1A).